We begin with the raw amino-acid sequence, 587 residues long: Formate--tetrahydrofolate ligase (587 aa).

Residue 73–80 (TPLGEGKS) coordinates ATP.

The protein belongs to the formate--tetrahydrofolate ligase family.

The catalysed reaction is (6S)-5,6,7,8-tetrahydrofolate + formate + ATP = (6R)-10-formyltetrahydrofolate + ADP + phosphate. Its pathway is one-carbon metabolism; tetrahydrofolate interconversion. The polypeptide is Formate--tetrahydrofolate ligase (Desulfosudis oleivorans (strain DSM 6200 / JCM 39069 / Hxd3) (Desulfococcus oleovorans)).